The chain runs to 192 residues: MSRTKKTRRITDIMPARKADKKPEQPKLSGGKNRKPTRYELDAKAREEKKKRKHKGLPTGSRNVDPAEQKKAAVKEVKDPRIGSRKKIPLMVEFVNKPEKGQIIKPVAVEEYKPHLSPELELEQLENNEILNQLLDEIEAGKTLSAKDQKFVDECLDRIDELMTELGIQDEDEDNGDALLRQFETMDINQFR.

Positions 1–80 (MSRTKKTRRI…KAAVKEVKDP (80 aa)) are disordered. 3 stretches are compositionally biased toward basic and acidic residues: residues 9–25 (RITD…KPEQ), 37–48 (TRYELDAKAREE), and 65–80 (DPAE…VKDP).

Belongs to the YihI family. As to quaternary structure, interacts with Der.

Its function is as follows. A GTPase-activating protein (GAP) that modifies Der/EngA GTPase function. May play a role in ribosome biogenesis. The polypeptide is Der GTPase-activating protein YihI (Actinobacillus pleuropneumoniae serotype 7 (strain AP76)).